A 159-amino-acid chain; its full sequence is Carbohydrate sulfotransferase 15 (159 aa).

Residues 1-159 (SGTTDFYRRI…YQPHNERLVK (159 aa)) lie on the Lumenal side of the membrane. N-linked (GlcNAc...) asparagine glycosylation is found at N42 and N112.

This sequence belongs to the sulfotransferase 1 family. It depends on a divalent metal cation as a cofactor. Glutathione serves as cofactor.

The protein resides in the golgi apparatus membrane. The enzyme catalyses dermatan 4'-sulfate + n 3'-phosphoadenylyl sulfate = dermatan 4',6'-bissulfate + n adenosine 3',5'-bisphosphate + n H(+). It catalyses the reaction chondroitin 4'-sulfate + n 3'-phosphoadenylyl sulfate = chondroitin 4',6'-bissulfate + n adenosine 3',5'-bisphosphate + n H(+). In terms of biological role, sulfotransferase that transfers sulfate from 3'-phosphoadenosine 5'-phosphosulfate (PAPS) to the C-6 hydroxyl group of the GalNAc 4-sulfate residue of chondroitin sulfate A and forms chondroitin sulfate E containing GlcA-GalNAc(4,6-SO(4)) repeating units. The polypeptide is Carbohydrate sulfotransferase 15 (GALNAC4S6ST) (Nototodarus sloanii (Wellington flying squid)).